The sequence spans 258 residues: Myelin proteolipid protein (258 aa).

The Cytoplasmic portion of the chain corresponds to 1 to 22; the sequence is MFPVRHALLCKALGCYDCCIRC. S-palmitoyl cysteine attachment occurs at residues Cys18, Cys19, and Cys22. A helical transmembrane segment spans residues 23-48; that stretch reads LGAVPYPSLVSTLLCFTGMALFCGCG. At 49-82 the chain is on the extracellular side; that stretch reads HEALAHTEVLVETYFVRNIQDYVILASFIKYFQY. A helical membrane pass occupies residues 83-103; that stretch reads VIYGLASFFFLYCILLLAEGF. Residues 104-128 are Cytoplasmic-facing; it reads YTTSAVKQTFGEFRSTRCGRCLSLT. 2 S-palmitoyl cysteine lipidation sites follow: Cys121 and Cys124. Residues 129–149 traverse the membrane as a helical segment; the sequence is FIIVTYVLAVIWLAVFAFTAI. At 150–218 the chain is on the extracellular side; it reads PSSSSLIWHR…KTKEFFVTYD (69 aa). An intrachain disulfide couples Cys181 to Cys200. Residues 219–239 traverse the membrane as a helical segment; that stretch reads LYIAAFAGAGIALLALFLYVV. Over 240–258 the chain is Cytoplasmic; sequence ATTYNYAVLRFLGRKGLRC.

This sequence belongs to the myelin proteolipid protein family. Central nervous system. Highest levels in spinal cord and medulla oblongata.

It localises to the cell membrane. In terms of biological role, this is the major myelin protein from the central nervous system. It plays an important role in the formation or maintenance of the multilamellar structure of myelin. May be involved in neuron and glial cell differentiation. This chain is Myelin proteolipid protein (plp), found in Oncorhynchus mykiss (Rainbow trout).